Reading from the N-terminus, the 389-residue chain is 1-acyl-sn-glycerol-3-phosphate acyltransferase 2 (389 aa).

The helical transmembrane segment at 2 to 22 (VIAAAVIVPLGLLFFISGLAV) threads the bilayer. The HXXXXD motif signature appears at 91 to 96 (HRSDID). Transmembrane regions (helical) follow at residues 305–325 (LAVV…FLHW) and 333–353 (KGIT…QILI). Residues 357–389 (QSERSTPAKVVPAKPKDNHHPESSSQTETEKEK) are disordered. Positions 370-389 (KPKDNHHPESSSQTETEKEK) are enriched in basic and acidic residues.

Belongs to the 1-acyl-sn-glycerol-3-phosphate acyltransferase family. Interacts with GPAT9 and DGAT1. As to expression, present in roots, leaves, stems, floral buds and siliques (at protein level). Widely expressed. In contrast to LPAT1, it is not expressed at higher level in leaves.

The protein localises to the endoplasmic reticulum membrane. It carries out the reaction a 1-acyl-sn-glycero-3-phosphate + an acyl-CoA = a 1,2-diacyl-sn-glycero-3-phosphate + CoA. The protein operates within phospholipid metabolism; CDP-diacylglycerol biosynthesis; CDP-diacylglycerol from sn-glycerol 3-phosphate: step 2/3. Converts lysophosphatidic acid (LPA) into phosphatidic acid by incorporating acyl moiety at the 2 position. Has preference for C-18-CoA substrates compared to C-16-CoA substrates. Required for female but not male gametophyte development. The polypeptide is 1-acyl-sn-glycerol-3-phosphate acyltransferase 2 (LPAT2) (Arabidopsis thaliana (Mouse-ear cress)).